A 102-amino-acid polypeptide reads, in one-letter code: Caroteno-chlorophyll a-c-binding protein (102 aa).

Chlorophyll a contacts are provided by glutamate 36 and histidine 39. A helical membrane pass occupies residues 78-98; the sequence is VLGLIKIVPAGLWGIMIFYAA.

Belongs to the light-harvesting chlorophyll a/b-binding (LHC) protein family. In terms of assembly, the LHC complex consists of chlorophyll a-b binding proteins. Requires Binds at least 14 chlorophylls (8 Chl-a and 6 Chl-b) and carotenoids such as lutein and neoxanthin. as cofactor. In terms of processing, photoregulated by reversible phosphorylation of its threonine residues.

The protein resides in the plastid. Its subcellular location is the chloroplast thylakoid membrane. The light-harvesting complex (LHC) functions as a light receptor, it captures and delivers excitation energy to photosystems with which it is closely associated. The chain is Caroteno-chlorophyll a-c-binding protein from Amphidinium carterae (Dinoflagellate).